The sequence spans 1071 residues: V-type proton ATPase catalytic subunit A (1071 aa).

N-acetylalanine is present on Ala2. Thr131 is subject to Phosphothreonine. Residue Gly257–Thr264 participates in ATP binding. The region spanning Leu494–Leu642 is the DOD-type homing endonuclease domain. Ser858 and Ser928 each carry phosphoserine.

Belongs to the ATPase alpha/beta chains family. As to quaternary structure, V-ATPase is a heteromultimeric enzyme composed of a peripheral catalytic V1 complex (components A to H) attached to an integral membrane V0 proton pore complex (components: a, c, c', c'', d, e, f and VOA1). Interacts with RAV1 and RAV2 components of the RAVE complex, which are essential for the stability and assembly of V-ATPase. This protein undergoes a protein self splicing that involves a post-translational excision of the VDE intervening region (intein) followed by peptide ligation.

It is found in the vacuole membrane. It catalyses the reaction ATP + H2O + 4 H(+)(in) = ADP + phosphate + 5 H(+)(out). Its function is as follows. Catalytic subunit of the V1 complex of vacuolar(H+)-ATPase (V-ATPase), a multisubunit enzyme composed of a peripheral complex (V1) that hydrolyzes ATP and a membrane integral complex (V0) that translocates protons. V-ATPase is responsible for acidifying and maintaining the pH of intracellular compartments. Functionally, PI-SceI is an endonuclease that can cleave at a site present in a VMA1 allele that lacks the derived endonuclease segment of the open reading frame; cleavage at this site only occurs during meiosis and initiates 'homing', a genetic event that converts a VMA1 allele lacking VDE into one that contains it. The protein is V-type proton ATPase catalytic subunit A of Saccharomyces cerevisiae (strain ATCC 204508 / S288c) (Baker's yeast).